The primary structure comprises 468 residues: 3-isopropylmalate dehydratase large subunit (468 aa).

The [4Fe-4S] cluster site is built by Cys-347, Cys-407, and Cys-410.

It belongs to the aconitase/IPM isomerase family. LeuC type 1 subfamily. As to quaternary structure, heterodimer of LeuC and LeuD. [4Fe-4S] cluster serves as cofactor.

It catalyses the reaction (2R,3S)-3-isopropylmalate = (2S)-2-isopropylmalate. Its pathway is amino-acid biosynthesis; L-leucine biosynthesis; L-leucine from 3-methyl-2-oxobutanoate: step 2/4. In terms of biological role, catalyzes the isomerization between 2-isopropylmalate and 3-isopropylmalate, via the formation of 2-isopropylmaleate. This chain is 3-isopropylmalate dehydratase large subunit, found in Rippkaea orientalis (strain PCC 8801 / RF-1) (Cyanothece sp. (strain PCC 8801)).